Reading from the N-terminus, the 416-residue chain is Beta sliding clamp (416 aa).

The protein belongs to the beta sliding clamp family. In terms of assembly, forms a ring-shaped head-to-tail homodimer around DNA which binds and tethers DNA polymerases and other proteins to the DNA. The DNA replisome complex has a single clamp-loading complex (3 tau and 1 each of delta, delta', psi and chi subunits) which binds 3 Pol III cores (1 core on the leading strand and 2 on the lagging strand) each with a beta sliding clamp dimer. Additional proteins in the replisome are other copies of gamma, psi and chi, Ssb, DNA helicase and RNA primase.

It localises to the cytoplasm. Functionally, confers DNA tethering and processivity to DNA polymerases and other proteins. Acts as a clamp, forming a ring around DNA (a reaction catalyzed by the clamp-loading complex) which diffuses in an ATP-independent manner freely and bidirectionally along dsDNA. Initially characterized for its ability to contact the catalytic subunit of DNA polymerase III (Pol III), a complex, multichain enzyme responsible for most of the replicative synthesis in bacteria; Pol III exhibits 3'-5' exonuclease proofreading activity. The beta chain is required for initiation of replication as well as for processivity of DNA replication. The protein is Beta sliding clamp (dnaN) of Chlamydia trachomatis serovar D (strain ATCC VR-885 / DSM 19411 / UW-3/Cx).